The following is a 903-amino-acid chain: Centrobin (903 aa).

Residues 1–10 are compositionally biased toward polar residues; it reads MATSADSPSS. The tract at residues 1–34 is disordered; sequence MATSADSPSSPLGAEDLLSDSSEPPGLNQVSSEV. Position 80 is a phosphoserine (Ser-80). Disordered stretches follow at residues 110–140, 471–493, 568–597, 669–704, 772–799, and 837–903; these read LQTS…DSDS, LRQA…GQHQ, LSTT…KEER, SALG…LPPA, RVPE…DGLT, and SGTD…GVWR. Positions 196-560 form a coiled coil; it reads RRKHCERHIQ…ERLQAMLQAH (365 aa). The segment at 365–903 is required for centrosome localization; it reads QEHQLKEHYQ…SMRSRGGVWR (539 aa). Residues 572–590 are compositionally biased toward pro residues; the sequence is LPPPNPPAPPAGPSSPGPQ. A compositionally biased stretch (basic and acidic residues) spans 675-685; the sequence is HPDHRAERPFP. Low complexity predominate over residues 778–791; the sequence is SSHSQGSGPSSGSP. Ser-790 carries the post-translational modification Phosphoserine. Over residues 837–863 the composition is skewed to basic and acidic residues; that stretch reads SGTDGRGDNVPRRNTDSRLGEIPRKEI.

In terms of assembly, interacts with LYST. In terms of tissue distribution, widely expressed (at protein level). Highly expressed in testis. Also expressed in spleen, thymus, prostate, small intestine, colon and peripheral blood leukocytes.

It is found in the cytoplasm. The protein resides in the cytoskeleton. Its subcellular location is the microtubule organizing center. The protein localises to the centrosome. It localises to the centriole. Required for centriole duplication. Inhibition of centriole duplication leading to defects in cytokinesis. The chain is Centrobin (CNTROB) from Homo sapiens (Human).